The following is a 205-amino-acid chain: Small ribosomal subunit protein uS4 (205 aa).

The segment covering 1-12 (MSKRVQAKHKLD) has biased composition (basic residues). Residues 1 to 49 (MSKRVQAKHKLDRRMGQNIWGRPKSPVNRREYGPGQHGQRRKGKMSDFG) are disordered. Positions 94-155 (RRLDAVVYRS…ASRQLEIVVV (62 aa)) constitute an S4 RNA-binding domain.

This sequence belongs to the universal ribosomal protein uS4 family. Part of the 30S ribosomal subunit. Contacts protein S5. The interaction surface between S4 and S5 is involved in control of translational fidelity.

Functionally, one of the primary rRNA binding proteins, it binds directly to 16S rRNA where it nucleates assembly of the body of the 30S subunit. In terms of biological role, with S5 and S12 plays an important role in translational accuracy. This Methylorubrum populi (strain ATCC BAA-705 / NCIMB 13946 / BJ001) (Methylobacterium populi) protein is Small ribosomal subunit protein uS4.